A 267-amino-acid chain; its full sequence is Interleukin-1 beta (267 aa).

Positions 1-114 (MAIVPEPAKE…ETCNDDFVCD (114 aa)) are excised as a propeptide.

Belongs to the IL-1 family. (Microbial infection) Interacts with African swine fever virus (ASFV) protein L83L. In terms of assembly, monomer. In its precursor form, weakly interacts with full-length MEFV; the mature cytokine does not interact at all. Interacts with integrins ITGAV:ITGBV and ITGA5:ITGB1; integrin-binding is required for IL1B signaling. Interacts with cargo receptor TMED10; the interaction is direct and is required for the secretion of IL1B mature form. Interacts with HSP90AB1; the interaction facilitates cargo translocation into the ERGIC. Interacts with HSP90B1; the interaction facilitates cargo translocation into the ERGIC.

The protein localises to the cytoplasm. Its subcellular location is the cytosol. It is found in the secreted. The protein resides in the lysosome. It localises to the extracellular exosome. Its function is as follows. Potent pro-inflammatory cytokine. Initially discovered as the major endogenous pyrogen, induces prostaglandin synthesis, neutrophil influx and activation, T-cell activation and cytokine production, B-cell activation and antibody production, and fibroblast proliferation and collagen production. Promotes Th17 differentiation of T-cells. Synergizes with IL12/interleukin-12 to induce IFNG synthesis from T-helper 1 (Th1) cells. Plays a role in angiogenesis by inducing VEGF production synergistically with TNF and IL6. Involved in transduction of inflammation downstream of pyroptosis: its mature form is specifically released in the extracellular milieu by passing through the gasdermin-D (GSDMD) pore. This Sus scrofa (Pig) protein is Interleukin-1 beta (IL1B).